The chain runs to 390 residues: Copper-containing nitrite reductase (390 aa).

The N-terminal stretch at 1–18 (MKRQALAAMIASLFALAA) is a signal peptide. Cys-19 carries N-palmitoyl cysteine lipidation. Cys-19 is lipidated: S-diacylglycerol cysteine. The segment at 30-51 (ETPAAAAEAASSAAQTAAETPS) is disordered. 2 consecutive Plastocyanin-like domains span residues 101 to 195 (WTFD…ILVE) and 245 to 346 (GHVG…LKVE). Cu cation contacts are provided by His-134, His-139, His-174, Cys-175, His-183, and Met-188. His-139 serves as a coordination point for substrate. A substrate-binding site is contributed by His-280. His-329 lines the Cu cation pocket. Residues 367 to 390 (GAAPAASAPAASAPAASASEKSVY) are disordered. Residues 368-390 (AAPAASAPAASAPAASASEKSVY) are compositionally biased toward low complexity. 3 repeat units span residues 371 to 375 (AASAP), 376 to 380 (AASAP), and 381 to 385 (AASAS). The segment at 371–385 (AASAPAASAPAASAS) is 3 X 5 AA tandem repeats of A-A-S-A-P.

The protein belongs to the multicopper oxidase family. As to quaternary structure, homotrimer. Requires Cu(+) as cofactor. Cu(2+) is required as a cofactor.

The protein localises to the cell outer membrane. The enzyme catalyses nitric oxide + Fe(III)-[cytochrome c] + H2O = Fe(II)-[cytochrome c] + nitrite + 2 H(+). Its function is as follows. Catalyzes the reduction of nitrite to nitric oxide (NO). It could be essential for growth and survival in oxygen-depleted environments. This Neisseria meningitidis serogroup B (strain ATCC BAA-335 / MC58) protein is Copper-containing nitrite reductase (aniA).